Consider the following 565-residue polypeptide: Hemagglutinin (565 aa).

The signal sequence occupies residues 1–17; sequence MKANLLVLLCALAAADA. Over 18–528 the chain is Extracellular; that stretch reads DTICIGYHAN…VKLESMGIYQ (511 aa). 6 disulfide bridges follow: Cys21–Cys480, Cys59–Cys291, Cys72–Cys84, Cys107–Cys152, Cys295–Cys319, and Cys487–Cys491. Asn27, Asn28, and Asn40 each carry an N-linked (GlcNAc...) asparagine; by host glycan. 2 N-linked (GlcNAc...) asparagine; by host glycosylation sites follow: Asn285 and Asn303. Asn497 carries an N-linked (GlcNAc...) asparagine; by host glycan. The chain crosses the membrane as a helical span at residues 529–549; sequence ILAIYSTVASSLVLLVSLGAI. Residues 550–565 are Cytoplasmic-facing; sequence SFWMCSNGSLQCRICI. 3 S-palmitoyl cysteine; by host lipidation sites follow: Cys554, Cys561, and Cys564.

This sequence belongs to the influenza viruses hemagglutinin family. In terms of assembly, homotrimer of disulfide-linked HA1-HA2. Interacts with human CACNA1C. Post-translationally, palmitoylated. In natural infection, inactive HA is matured into HA1 and HA2 outside the cell by one or more trypsin-like, arginine-specific endoprotease secreted by the bronchial epithelial cells. One identified protease that may be involved in this process is secreted in lungs by club cells.

It localises to the virion membrane. The protein localises to the host apical cell membrane. Binds to sialic acid-containing receptors on the cell surface, bringing about the attachment of the virus particle to the cell. This attachment induces virion internalization either through clathrin-dependent endocytosis or through clathrin- and caveolin-independent pathway. Plays a major role in the determination of host range restriction and virulence. Class I viral fusion protein. Responsible for penetration of the virus into the cell cytoplasm by mediating the fusion of the membrane of the endocytosed virus particle with the endosomal membrane. Low pH in endosomes induces an irreversible conformational change in HA2, releasing the fusion hydrophobic peptide. Several trimers are required to form a competent fusion pore. The chain is Hemagglutinin from Aves (Human).